Reading from the N-terminus, the 222-residue chain is MTDNNNGEIVEDKDNEKLKGEDNINNHISNHNNTEETSFEDPELEEMKKRFREMEEEAKKLTELQNNLESNITGNNGVGIGGNIGGGGGLMNTDQEEIDSRSVYVGNVDYKSTHDQILAYFQSCGTVNRITILSDKTTGHPKGCCYVEFVNKESIINAMALNDSFFNERQLKITPKRTNLPYYMRQGVLPPGRGGFRGGRGRGGIRGGIRGGRGRGNFYQPY.

Residues 1–43 (MTDNNNGEIVEDKDNEKLKGEDNINNHISNHNNTEETSFEDPE) are disordered. Residues 10–24 (VEDKDNEKLKGEDNI) show a composition bias toward basic and acidic residues. The RRM domain occupies 101–178 (RSVYVGNVDY…RQLKITPKRT (78 aa)).

Its subcellular location is the nucleus. Functionally, involved in the 3'-end formation of mRNA precursors (pre-mRNA) by the addition of a poly(A) tail of 200-250 nt to the upstream cleavage product. The chain is Polyadenylate-binding protein 2 (pabpn1) from Dictyostelium discoideum (Social amoeba).